A 273-amino-acid polypeptide reads, in one-letter code: Peptide deformylase 1B, chloroplastic/mitochondrial (273 aa).

The N-terminal 56 residues, 1-56 (MAVCNCFLQAPPLSRILLPVLSRRATTLSAGYGRLKSTVTFCSTVNRTSPLTSSVR), are a transit peptide targeting the chloroplast and mitochondrion. 2 residues coordinate Fe cation: cysteine 171 and histidine 213. The active site involves glutamate 214. Histidine 217 contacts Fe cation. Residues 246 to 261 (YEEKTGLPSPERVEAR) are compositionally biased toward basic and acidic residues. A disordered region spans residues 246 to 273 (YEEKTGLPSPERVEARQKRKAGVGFGKR). Basic residues predominate over residues 262–273 (QKRKAGVGFGKR).

It belongs to the polypeptide deformylase family. As to quaternary structure, homodimer. The cofactor is Fe(2+). As to expression, expressed in leaves and flowers.

It is found in the plastid. The protein resides in the chloroplast stroma. It localises to the mitochondrion. The catalysed reaction is N-terminal N-formyl-L-methionyl-[peptide] + H2O = N-terminal L-methionyl-[peptide] + formate. Its activity is regulated as follows. Inhibited by actinonin. Removes the formyl group from the N-terminal Met of newly synthesized proteins. Has a preferred substrate specificity towards the photosystem II (PS II) D1 polypeptide. The sequence is that of Peptide deformylase 1B, chloroplastic/mitochondrial (PDF1B) from Arabidopsis thaliana (Mouse-ear cress).